A 746-amino-acid polypeptide reads, in one-letter code: Double-stranded RNA-specific editase B2 (746 aa).

Disordered stretches follow at residues 1–36 and 50–105; these read MASV…KDKV and SPGT…PLEE. The segment covering 20-34 has biased composition (basic residues); that stretch reads CKSKRRRRRRSKRKD. Residues 23 to 35 form an R-domain (ssRNA-binding) region; the sequence is KRRRRRRSKRKDK. 2 DRBM domains span residues 126 to 192 and 284 to 348; these read TPKN…SFVQ and NPVV…ALFD. An A to I editase domain is found at 415 to 742; that stretch reads VLSSGTKCIS…VRKPPEQDQF (328 aa). His439 is a Zn(2+) binding site. Glu441 functions as the Proton donor in the catalytic mechanism. Residues Cys497 and Cys562 each coordinate Zn(2+).

Brain specific.

The protein resides in the nucleus. Lacks editing activity. It prevents the binding of other ADAR enzymes to targets in vitro, and decreases the efficiency of these enzymes. Capable of binding to dsRNA but also to ssRNA. In Rattus norvegicus (Rat), this protein is Double-stranded RNA-specific editase B2 (Adarb2).